The sequence spans 244 residues: Phosphatidylserine decarboxylase proenzyme (244 aa).

Residue Ser212 is the Schiff-base intermediate with substrate; via pyruvic acid of the active site. Ser212 is modified (pyruvic acid (Ser); by autocatalysis).

This sequence belongs to the phosphatidylserine decarboxylase family. PSD-A subfamily. In terms of assembly, heterodimer of a large membrane-associated beta subunit and a small pyruvoyl-containing alpha subunit. The cofactor is pyruvate. Post-translationally, is synthesized initially as an inactive proenzyme. Formation of the active enzyme involves a self-maturation process in which the active site pyruvoyl group is generated from an internal serine residue via an autocatalytic post-translational modification. Two non-identical subunits are generated from the proenzyme in this reaction, and the pyruvate is formed at the N-terminus of the alpha chain, which is derived from the carboxyl end of the proenzyme. The post-translation cleavage follows an unusual pathway, termed non-hydrolytic serinolysis, in which the side chain hydroxyl group of the serine supplies its oxygen atom to form the C-terminus of the beta chain, while the remainder of the serine residue undergoes an oxidative deamination to produce ammonia and the pyruvoyl prosthetic group on the alpha chain.

Its subcellular location is the cell membrane. It carries out the reaction a 1,2-diacyl-sn-glycero-3-phospho-L-serine + H(+) = a 1,2-diacyl-sn-glycero-3-phosphoethanolamine + CO2. It participates in phospholipid metabolism; phosphatidylethanolamine biosynthesis; phosphatidylethanolamine from CDP-diacylglycerol: step 2/2. Catalyzes the formation of phosphatidylethanolamine (PtdEtn) from phosphatidylserine (PtdSer). The sequence is that of Phosphatidylserine decarboxylase proenzyme from Granulibacter bethesdensis (strain ATCC BAA-1260 / CGDNIH1).